The sequence spans 236 residues: Probable fimbrial chaperone EcpE (236 aa).

Residues 1–27 (MFRRRGVTLTKALLTAVCMLAAPLTQA) form the signal peptide.

This sequence belongs to the EcpB/EcpE family.

Its function is as follows. Part of the ecpRABCDE operon, which encodes the E.coli common pilus (ECP). ECP is found in both commensal and pathogenic strains and plays a dual role in early-stage biofilm development and host cell recognition. The protein is Probable fimbrial chaperone EcpE (ecpE) of Escherichia coli (strain K12).